A 256-amino-acid polypeptide reads, in one-letter code: Enolase-phosphatase E1 (256 aa).

The Mg(2+) site is built by aspartate 14 and glutamate 16. Substrate-binding positions include 142–143 and lysine 176; that span reads SS. Residue aspartate 201 coordinates Mg(2+).

It belongs to the HAD-like hydrolase superfamily. MasA/MtnC family. In terms of assembly, monomer. The cofactor is Mg(2+).

The protein resides in the cytoplasm. Its subcellular location is the nucleus. The catalysed reaction is 5-methylsulfanyl-2,3-dioxopentyl phosphate + H2O = 1,2-dihydroxy-5-(methylsulfanyl)pent-1-en-3-one + phosphate. It functions in the pathway amino-acid biosynthesis; L-methionine biosynthesis via salvage pathway; L-methionine from S-methyl-5-thio-alpha-D-ribose 1-phosphate: step 3/6. Its pathway is amino-acid biosynthesis; L-methionine biosynthesis via salvage pathway; L-methionine from S-methyl-5-thio-alpha-D-ribose 1-phosphate: step 4/6. Bifunctional enzyme that catalyzes the enolization of 2,3-diketo-5-methylthiopentyl-1-phosphate (DK-MTP-1-P) into the intermediate 2-hydroxy-3-keto-5-methylthiopentenyl-1-phosphate (HK-MTPenyl-1-P), which is then dephosphorylated to form the acireductone 1,2-dihydroxy-3-keto-5-methylthiopentene (DHK-MTPene). This is Enolase-phosphatase E1 from Drosophila simulans (Fruit fly).